The primary structure comprises 592 residues: V-type ATP synthase alpha chain (592 aa).

Residue 232-239 (GPFGAGKT) coordinates ATP.

This sequence belongs to the ATPase alpha/beta chains family.

It carries out the reaction ATP + H2O + 4 H(+)(in) = ADP + phosphate + 5 H(+)(out). Functionally, produces ATP from ADP in the presence of a proton gradient across the membrane. The V-type alpha chain is a catalytic subunit. This Clostridium botulinum (strain Eklund 17B / Type B) protein is V-type ATP synthase alpha chain.